Reading from the N-terminus, the 271-residue chain is Phosphonoacetaldehyde hydrolase (271 aa).

D12 serves as the catalytic Nucleophile. Mg(2+) is bound by residues D12 and A14. K54 functions as the Schiff-base intermediate with substrate in the catalytic mechanism. Mg(2+) is bound at residue D188.

This sequence belongs to the HAD-like hydrolase superfamily. PhnX family. In terms of assembly, homodimer. It depends on Mg(2+) as a cofactor.

The enzyme catalyses phosphonoacetaldehyde + H2O = acetaldehyde + phosphate + H(+). Functionally, involved in phosphonate degradation. This chain is Phosphonoacetaldehyde hydrolase, found in Vibrio vulnificus (strain CMCP6).